Here is a 457-residue protein sequence, read N- to C-terminus: PDZ and LIM domain protein 7 (457 aa).

The PDZ domain maps to 1 to 85 (MDSFKVVLEG…RLSLGLSRAQ (85 aa)). A Phosphoserine modification is found at serine 78. Disordered stretches follow at residues 82–166 (SRAQ…QSRS) and 186–226 (FMKK…PWAV). Threonine 96 is subject to Phosphothreonine. Arginine 103 bears the Asymmetric dimethylarginine mark. Position 111 is a phosphoserine (serine 111). A compositionally biased stretch (polar residues) spans 126 to 135 (DSTLRQNGQL). Residues 144 to 157 (SKQRLMEDTEDWRP) show a composition bias toward basic and acidic residues. Serine 247 is modified (phosphoserine). LIM zinc-binding domains lie at 280–338 (PVCH…VRYA), 339–398 (PNCA…MFGT), and 399–457 (KCRG…FSHV).

As to quaternary structure, specifically binds via its LIM zinc-binding 3 domain (LIM 3) domain to endocytic codes of INSR, but not with those of IGF1R, LDLR, TFRC, or EGFR. Interacts with various PKC isoforms through the LIM zinc-binding domains. Binds to RET in a phosphorylation-independent manner via its LIM zinc-binding domain 2 (LIM 2). Probably part of a complex with SHC and the RET dimer. Interacts with TPM2, TBX4 and TBX5.

The protein localises to the cytoplasm. Its subcellular location is the cytoskeleton. May function as a scaffold on which the coordinated assembly of proteins can occur. May play a role as an adapter that, via its PDZ domain, localizes LIM-binding proteins to actin filaments of both skeletal muscle and nonmuscle tissues. Involved in both of the two fundamental mechanisms of bone formation, direct bone formation (e.g. embryonic flat bones mandible and cranium), and endochondral bone formation (e.g. embryonic long bone development). Plays a role during fracture repair. Involved in BMP6 signaling pathway. The protein is PDZ and LIM domain protein 7 (Pdlim7) of Mus musculus (Mouse).